Consider the following 541-residue polypeptide: Protein wntless homolog (541 aa).

The signal sequence occupies residues methionine 1 to alanine 42. Over valine 43–lysine 232 the chain is Lumenal. Residues valine 233–tryptophan 253 traverse the membrane as a helical segment. At arginine 254–lysine 268 the chain is on the cytoplasmic side. Residues valine 269–isoleucine 289 form a helical membrane-spanning segment. Topologically, residues glycine 290–arginine 303 are lumenal. Residues glutamine 304 to methionine 324 traverse the membrane as a helical segment. Topologically, residues aspartate 325–arginine 331 are cytoplasmic. A helical transmembrane segment spans residues leucine 332–phenylalanine 352. Over aspartate 353–alanine 380 the chain is Lumenal. The chain crosses the membrane as a helical span at residues phenylalanine 381–phenylalanine 401. Residues glutamine 402 to arginine 431 lie on the Cytoplasmic side of the membrane. Residues phenylalanine 432–valine 452 form a helical membrane-spanning segment. Over serine 453 to serine 471 the chain is Lumenal. The chain crosses the membrane as a helical span at residues alanine 472–tyrosine 492. Residues alanine 493–glutamate 541 are Cytoplasmic-facing.

The protein belongs to the wntless family.

Its subcellular location is the golgi apparatus membrane. The protein resides in the cytoplasmic vesicle membrane. In terms of biological role, may play an essential role in Wnt signaling pathway. May be required for Wnt-dependent patterning processes. This Gallus gallus (Chicken) protein is Protein wntless homolog (WLS).